The primary structure comprises 510 residues: Flavonoid 3',5'-hydroxylase (510 aa).

Cysteine 447 provides a ligand contact to heme.

Belongs to the cytochrome P450 family. Heme is required as a cofactor.

It catalyses the reaction a 3',5'-unsubstituted flavanone + 2 reduced [NADPH--hemoprotein reductase] + 2 O2 = a 3',5'-dihydroxyflavanone + 2 oxidized [NADPH--hemoprotein reductase] + 2 H2O + 2 H(+). It functions in the pathway pigment biosynthesis; anthocyanin biosynthesis. In terms of biological role, catalyzes the 3'5'-hydroxylation of naringenin and eriodictyol to form 5,7,3,'4',5'-pentahydroxyflavanone and 3',5'-hydroxylation of dihydrokaempferol and dihydroquercetin to form dihydromyricetin. In Eustoma exaltatum subsp. russellianum (Bluebells), this protein is Flavonoid 3',5'-hydroxylase (CYP75A7).